The following is a 118-amino-acid chain: UPF0342 protein BC_0880 (118 aa).

The protein belongs to the UPF0342 family.

This Bacillus cereus (strain ATCC 14579 / DSM 31 / CCUG 7414 / JCM 2152 / NBRC 15305 / NCIMB 9373 / NCTC 2599 / NRRL B-3711) protein is UPF0342 protein BC_0880.